The primary structure comprises 395 residues: Elongation factor Tu (395 aa).

The 195-residue stretch at 10–204 folds into the tr-type G domain; it reads KPHVNIGTIG…AVDSYIPTPE (195 aa). Positions 19–26 are G1; sequence GHVDHGKT. GTP is bound at residue 19–26; the sequence is GHVDHGKT. Residue Thr26 coordinates Mg(2+). The interval 60-64 is G2; that stretch reads GITIS. The tract at residues 81–84 is G3; it reads DCPG. Residues 81-85 and 136-139 each bind GTP; these read DCPGH and NKCD. A G4 region spans residues 136 to 139; the sequence is NKCD. Residues 174–176 form a G5 region; the sequence is SAL.

The protein belongs to the TRAFAC class translation factor GTPase superfamily. Classic translation factor GTPase family. EF-Tu/EF-1A subfamily. In terms of assembly, monomer.

The protein localises to the cytoplasm. The enzyme catalyses GTP + H2O = GDP + phosphate + H(+). GTP hydrolase that promotes the GTP-dependent binding of aminoacyl-tRNA to the A-site of ribosomes during protein biosynthesis. The sequence is that of Elongation factor Tu from Listeria monocytogenes serotype 4b (strain CLIP80459).